Reading from the N-terminus, the 252-residue chain is MATSIARLSRRGVTSNLIRRCFAAEAALARKTELPKPQFTVSPSTDRVKWDYRGQRQIIPLGQWLPKVAVDAYVAPNVVLAGQVTVWDGSSVWNGAVLRGDLNKITVGFCSNVQERCVVHAAWSSPTGLPAATIIDRYVTVGAYSLLRSCTIEPECIIGQHSILMEGSLVETRSILEAGSVVPPGRRIPSGELWGGNPARFIRTLTNEETLEIPKLAVAINHLSGDYFSEFLPYSTVYLEVEKFKKSLGIAV.

Residues 1-29 (MATSIARLSRRGVTSNLIRRCFAAEAALA) constitute a mitochondrion transit peptide. Substrate is bound by residues 99 to 101 (RGD) and 114 to 115 (QE). H120 contacts Zn(2+). The substrate site is built by R148, Q160, and Y227.

This sequence belongs to the gamma-class carbonic anhydrase family. As to quaternary structure, component of the mitochondrial oxidoreductase respiratory chain complex I; element of the extra matrix-exposed domain, which is attached to the membrane arm of this complex. Interacts with GAMMACA2.

It localises to the mitochondrion membrane. Involved in complex I assembly in mitochondria and respiration. This is Gamma carbonic anhydrase-like 1, mitochondrial (GAMMACAL1) from Arabidopsis thaliana (Mouse-ear cress).